The sequence spans 393 residues: Dual specificity mitogen-activated protein kinase kinase 1 (393 aa).

A disordered region spans residues M1–E27. In terms of domain architecture, Protein kinase spans F68–I361. ATP-binding positions include L74–V82 and K97. The active-site Proton acceptor is the D190. Phosphoserine; by RAF occurs at positions 218 and 222. Residues E270–P307 form an RAF1-binding region. Phosphothreonine is present on T286. T292 bears the Phosphothreonine; by MAPK1 mark. S298 carries the phosphoserine; by PAK modification.

The protein belongs to the protein kinase superfamily. STE Ser/Thr protein kinase family. MAP kinase kinase subfamily. In terms of assembly, found in a complex with at least BRAF, HRAS, MAP2K1, MAPK3/ERK1 and RGS14. Forms a heterodimer with MAP2K2/MEK2. Forms heterodimers with KSR2 which further dimerize to form tetramers. Interacts with KSR1 or KSR2 and BRAF; the interaction with KSR1 or KSR2 mediates KSR1-BRAF or KSR2-BRAF dimerization. Interacts with ARBB2, LAMTOR3, MAPK1/ERK2 and RAF1. Interacts with MAPK1/ERK2. Interacts with MORG1. Interacts with PPARG. Interacts with SGK1. Interacts with BIRC6/bruce. Interacts with KAT7; the interaction promotes KAT7 phosphorylation. Interacts with RAF1 and NEK10; the interaction is required for ERK1/2-signaling pathway activation in response to UV irradiation. Interacts with TRAF3IP3. Interacts with MOS. Phosphorylation at Ser-218 and Ser-222 by MAP kinase kinase kinases (BRAF or MEKK1) positively regulates kinase activity. Also phosphorylated at Thr-292 by MAPK1/ERK2 and at Ser-298 by PAK. MAPK1/ERK2 phosphorylation of Thr-292 occurs in response to cellular adhesion and leads to inhibition of Ser-298 phosphorylation by PAK. Autophosphorylated at Ser-218 and Ser-222, autophosphosphorylation is promoted by NEK10 following UV irradiation.

It is found in the cytoplasm. It localises to the cytoskeleton. The protein resides in the microtubule organizing center. Its subcellular location is the centrosome. The protein localises to the spindle pole body. It is found in the nucleus. It localises to the membrane. The catalysed reaction is L-seryl-[protein] + ATP = O-phospho-L-seryl-[protein] + ADP + H(+). It carries out the reaction L-threonyl-[protein] + ATP = O-phospho-L-threonyl-[protein] + ADP + H(+). The enzyme catalyses L-tyrosyl-[protein] + ATP = O-phospho-L-tyrosyl-[protein] + ADP + H(+). Ras proteins such as HRAS mediate the activation of RAF proteins such as RAF1 or BRAF which in turn activate extracellular signal-regulated kinases (ERK) through MAPK (mitogen-activated protein kinases) and ERK kinases MAP2K1/MEK1 and MAP2K2/MEK2. Activation occurs through phosphorylation of Ser-218 and Ser-222. MAP2K1/MEK1 binds KSR1 or KSR2 releasing the inhibitory intramolecular interaction between KSR1 or KSR2 protein kinase and N-terminal domains. This allows KSR1 or KSR2 dimerization with BRAF leading to BRAF activation and phosphorylation of MAP2K1. MAP2K1/MEK1 is also the target of negative feed-back regulation by its substrate kinases, such as MAPK1/ERK2. These phosphorylate MAP2K1/MEK1 on Thr-292, thereby facilitating dephosphorylation of the activating residues Ser-218 and Ser-222. Inhibited by serine/threonine phosphatase 2A. Its function is as follows. Dual specificity protein kinase which acts as an essential component of the MAP kinase signal transduction pathway. Binding of extracellular ligands such as growth factors, cytokines and hormones to their cell-surface receptors activates RAS and this initiates RAF1 activation. RAF1 then further activates the dual-specificity protein kinases MAP2K1/MEK1 and MAP2K2/MEK2. Both MAP2K1/MEK1 and MAP2K2/MEK2 function specifically in the MAPK/ERK cascade, and catalyze the concomitant phosphorylation of a threonine and a tyrosine residue in a Thr-Glu-Tyr sequence located in the extracellular signal-regulated kinases MAPK3/ERK1 and MAPK1/ERK2, leading to their activation and further transduction of the signal within the MAPK/ERK cascade. Activates BRAF in a KSR1 or KSR2-dependent manner; by binding to KSR1 or KSR2 releases the inhibitory intramolecular interaction between KSR1 or KSR2 protein kinase and N-terminal domains which promotes KSR1 or KSR2-BRAF dimerization and BRAF activation. Depending on the cellular context, this pathway mediates diverse biological functions such as cell growth, adhesion, survival and differentiation, predominantly through the regulation of transcription, metabolism and cytoskeletal rearrangements. One target of the MAPK/ERK cascade is peroxisome proliferator-activated receptor gamma (PPARG), a nuclear receptor that promotes differentiation and apoptosis. MAP2K1/MEK1 has been shown to export PPARG from the nucleus. The MAPK/ERK cascade is also involved in the regulation of endosomal dynamics, including lysosome processing and endosome cycling through the perinuclear recycling compartment (PNRC), as well as in the fragmentation of the Golgi apparatus during mitosis. The polypeptide is Dual specificity mitogen-activated protein kinase kinase 1 (Map2k1) (Mus musculus (Mouse)).